Reading from the N-terminus, the 244-residue chain is Mitochondrial import inner membrane translocase subunit Tim21 (244 aa).

Residues 1 to 18 constitute a mitochondrion transit peptide; sequence MICAFLRVVQHAEKLHGS. The segment at 65-96 is disordered; the sequence is TQGPDPRKAKEDSTKQVSIRRNQREETGVSMS. Positions 69 to 78 are enriched in basic and acidic residues; sequence DPRKAKEDST. The helical transmembrane segment at 107-127 threads the bilayer; sequence SYLIVVLFGVGLTGGLLYAIF.

It belongs to the TIM21 family. In terms of assembly, component of the TIM23 complex. Component of the MITRAC (mitochondrial translation regulation assembly intermediate of cytochrome c oxidase complex) complex, the core components of this complex being COA3/MITRAC12 and COX14. Interacts with COA3 and MT-CO1/COX1.

It localises to the mitochondrion membrane. In terms of biological role, participates in the translocation of transit peptide-containing proteins across the mitochondrial inner membrane. Also required for assembly of mitochondrial respiratory chain complex I and complex IV as component of the MITRAC (mitochondrial translation regulation assembly intermediate of cytochrome c oxidase complex) complex. Probably shuttles between the presequence translocase and respiratory-chain assembly intermediates in a process that promotes incorporation of early nuclear-encoded subunits into these complexes. The polypeptide is Mitochondrial import inner membrane translocase subunit Tim21 (Timm21) (Mus musculus (Mouse)).